The sequence spans 120 residues: Ribosome-binding factor A (120 aa).

Belongs to the RbfA family. As to quaternary structure, monomer. Binds 30S ribosomal subunits, but not 50S ribosomal subunits or 70S ribosomes.

Its subcellular location is the cytoplasm. One of several proteins that assist in the late maturation steps of the functional core of the 30S ribosomal subunit. Associates with free 30S ribosomal subunits (but not with 30S subunits that are part of 70S ribosomes or polysomes). Required for efficient processing of 16S rRNA. May interact with the 5'-terminal helix region of 16S rRNA. In Chlamydia caviae (strain ATCC VR-813 / DSM 19441 / 03DC25 / GPIC) (Chlamydophila caviae), this protein is Ribosome-binding factor A.